The chain runs to 139 residues: Large ribosomal subunit protein uL16 (139 aa).

The protein belongs to the universal ribosomal protein uL16 family. As to quaternary structure, part of the 50S ribosomal subunit.

Its function is as follows. Binds 23S rRNA and is also seen to make contacts with the A and possibly P site tRNAs. This chain is Large ribosomal subunit protein uL16, found in Treponema pallidum (strain Nichols).